The following is a 158-amino-acid chain: Ribonucleases P/MRP protein subunit POP6 (158 aa).

Residues Lys51–Arg71 are a coiled coil.

As to quaternary structure, component of nuclear RNase P and RNase MRP complexes. RNase P consists of an RNA moiety and at least 9 protein subunits including POP1, POP3, POP4, POP5, POP6, POP7, POP8, RPP1 and RPR2. RNase MRP complex consists of an RNA moiety and at least 10 protein subunits including POP1, POP3, POP4, POP5, POP6, POP7, POP8, RMP1, RPP1 and SNM1, many of which are shared with the RNase P complex.

It localises to the nucleus. The catalysed reaction is Endonucleolytic cleavage of RNA, removing 5'-extranucleotides from tRNA precursor.. In terms of biological role, component of ribonuclease P, a protein complex that generates mature tRNA molecules by cleaving their 5'-ends. Also a component of RNase MRP, which cleaves pre-rRNA sequences. The sequence is that of Ribonucleases P/MRP protein subunit POP6 (POP6) from Saccharomyces cerevisiae (strain ATCC 204508 / S288c) (Baker's yeast).